Here is a 245-residue protein sequence, read N- to C-terminus: 1-(5-phosphoribosyl)-5-[(5-phosphoribosylamino)methylideneamino] imidazole-4-carboxamide isomerase (245 aa).

Asp-7 acts as the Proton acceptor in catalysis. Asp-129 acts as the Proton donor in catalysis.

It belongs to the HisA/HisF family.

It is found in the cytoplasm. The catalysed reaction is 1-(5-phospho-beta-D-ribosyl)-5-[(5-phospho-beta-D-ribosylamino)methylideneamino]imidazole-4-carboxamide = 5-[(5-phospho-1-deoxy-D-ribulos-1-ylimino)methylamino]-1-(5-phospho-beta-D-ribosyl)imidazole-4-carboxamide. It participates in amino-acid biosynthesis; L-histidine biosynthesis; L-histidine from 5-phospho-alpha-D-ribose 1-diphosphate: step 4/9. The chain is 1-(5-phosphoribosyl)-5-[(5-phosphoribosylamino)methylideneamino] imidazole-4-carboxamide isomerase from Buchnera aphidicola subsp. Cinara cedri (strain Cc).